A 663-amino-acid polypeptide reads, in one-letter code: Polyunsaturated fatty acid lipoxygenase ALOX12 (663 aa).

The PLAT domain occupies Gly2–Arg114. The 549-residue stretch at Leu115 to Ile663 folds into the Lipoxygenase domain. A Phosphoserine modification is found at Ser246. Fe cation-binding residues include His360, His365, His540, Asn544, and Ile663.

The protein belongs to the lipoxygenase family. The cofactor is Fe cation. Expressed in vascular smooth muscle cells.

Its subcellular location is the cytoplasm. The protein resides in the cytosol. It is found in the membrane. It carries out the reaction (5Z,8Z,11Z,14Z)-eicosatetraenoate + O2 = (12S)-hydroperoxy-(5Z,8Z,10E,14Z)-eicosatetraenoate. The enzyme catalyses (5Z,8Z,11Z,14Z)-eicosatetraenoate + O2 = (15S)-hydroperoxy-(5Z,8Z,11Z,13E)-eicosatetraenoate. It catalyses the reaction 2 leukotriene A4 + O2 + 2 H2O = 2 lipoxin A4. The catalysed reaction is 2 leukotriene A4 + O2 + 2 H2O = 2 lipoxin B4. It carries out the reaction (14S)-hydroperoxy-(4Z,7Z,10Z,12E,16Z,19Z)-docosahexaenoate = (13S,14S)-epoxy-(4Z,7Z,9E,11E,16Z,19Z)-docosahexaenoate + H2O. The enzyme catalyses N-(5Z,8Z,11Z,14Z)-eicosatetraenoyl-L-alanine + O2 = N-(15S)-hydroperoxy-(5Z,8Z,11Z,13E)-eicosatetraenoyl-alanine. It catalyses the reaction N-(5Z,8Z,11Z,14Z)-eicosatetraenoyl-L-alanine + O2 = N-(12S)-hydroperoxy-(5Z,8Z,10E,14Z)-eicosatetraenoyl-alanine. The catalysed reaction is N-(5Z,8Z,11Z,14Z)-eicosatetraenoyl-gamma-aminobutanoate + O2 = N-(15S)-hydroperoxy-(5Z,8Z,11Z,13E)-eicosatetraenoyl-gamma-aminobutanoate. It carries out the reaction N-(5Z,8Z,11Z,14Z)-eicosatetraenoyl-gamma-aminobutanoate + O2 = N-(12S)-hydroperoxy-(5Z,8Z,10E,14Z)-eicosatetraenoyl-gamma-aminobutanoate. The enzyme catalyses N-(5Z,8Z,11Z,14Z)-eicosatetraenoyl-glycine + O2 = N-(15S)-hydroperoxy-(5Z,8Z,11Z,13E)-eicosatetraenoyl-glycine. It catalyses the reaction N-(5Z,8Z,11Z,14Z)-eicosatetraenoyl-glycine + O2 = N-(12S)-hydroperoxy-(5Z,8Z,10E,14Z)-eicosatetraenoyl-glycine. The catalysed reaction is N-(5Z,8Z,11Z,14Z)-eicosatetraenoyl-taurine + O2 = N-(12S)-hydroperoxy-(5Z,8Z,10E,14Z)-eicosatetraenoyl-taurine. It carries out the reaction N-(5Z,8Z,11Z,14Z)-eicosatetraenoyl-taurine + O2 = N-(15S)-hydroperoxy-(5Z,8Z,11Z,13E)-eicosatetraenoyl-taurine. The enzyme catalyses (4Z,7Z,10Z,13Z,16Z,19Z)-docosahexaenoate + O2 = (14S)-hydroperoxy-(4Z,7Z,10Z,12E,16Z,19Z)-docosahexaenoate. It catalyses the reaction (7S)-hydroperoxy-(4Z,8E,10Z,13Z,16Z,19Z)-docosahexaenoate + O2 = (7S,14S)-dihydroperoxy-(4Z,8E,10Z,12E,16Z,19Z)-docosahexaenoate. The catalysed reaction is (7S)-hydroperoxy-(4Z,8E,10Z,13Z,16Z,19Z)-docosahexaenoate + O2 = (7S,17S)-dihydroperoxy-(4Z,8E,10Z,13Z,15E,19Z)-docosahexaenoate. It carries out the reaction (5Z,8Z,11Z,14Z,17Z)-eicosapentaenoate + O2 = (12S)-hydroperoxy-(5Z,8Z,10E,14Z,17Z)-eicosapentaenoate. The enzyme catalyses (8Z,11Z,14Z)-eicosatrienoate + O2 = (12S)-hydroperoxy-(8Z,10E,14Z)-eicosatrienoate. It catalyses the reaction (9Z,12Z)-octadecadienoate + O2 = (13S)-hydroperoxy-(9Z,11E)-octadecadienoate. The catalysed reaction is (5Z,8Z,11Z)-eicosatrienoate + O2 = (12S)-hydroperoxy-(5Z,8Z,10E)-eicosatrienoate. It carries out the reaction (14R,15S)-epoxy-(5Z,8Z,11Z)-eicosatrienoate + O2 = (12S)-hydroperoxy-(14R,15S)-epoxy-(5Z,8Z,10E)-eicosatrienoate. The enzyme catalyses (14S,15R)-epoxy-(5Z,8Z,11Z)-eicosatrienoate + O2 = (12S)-hydroperoxy-(14S,15R)-epoxy-(5Z,8Z,10E)-eicosatrienoate. Its pathway is lipid metabolism; hydroperoxy eicosatetraenoic acid biosynthesis. With respect to regulation, activated by EGF. Arachidonic acid conversion is inhibited by (13S,14S)-epoxy-(4Z,7Z,9E,11E,16Z,19Z)-docosahexaenoate (13S,14S-epoxy-DHA). Arachidonate 12-lipoxygenase activity is decreased when PH decreases from 7.4 to 6. Functionally, catalyzes the regio and stereo-specific incorporation of molecular oxygen into free and esterified polyunsaturated fatty acids generating lipid hydroperoxides that can be further reduced to the corresponding hydroxy species. Mainly converts arachidonate ((5Z,8Z,11Z,14Z)-eicosatetraenoate) to the specific bioactive lipid (12S)-hydroperoxyeicosatetraenoate/(12S)-HPETE. Through the production of bioactive lipids like (12S)-HPETE it regulates different biological processes including platelet activation. It can also catalyze the epoxidation of double bonds of polyunsaturated fatty acids such as (14S)-hydroperoxy-docosahexaenoate/(14S)-HPDHA resulting in the formation of (13S,14S)-epoxy-DHA. Furthermore, it may participate in the sequential oxidations of DHA ((4Z,7Z,10Z,13Z,16Z,19Z)-docosahexaenoate) to generate specialized pro-resolving mediators (SPMs) like resolvin D5 ((7S,17S)-diHPDHA) and (7S,14S)-diHPDHA, that actively down-regulate the immune response and have anti-aggregation properties with platelets. An additional function involves a multistep process by which it transforms leukotriene A4/LTA4 into the bioactive lipids lipoxin A4/LXA4 and lipoxin B4/LXB4, both are vasoactive and LXA4 may regulate neutrophil function via occupancy of specific recognition sites. Can also peroxidize linoleate ((9Z,12Z)-octadecadienoate) to (13S)-hydroperoxyoctadecadienoate/ (13S-HPODE). Due to its role in regulating both the expression of the vascular endothelial growth factor (VEGF, an angiogenic factor involved in the survival and metastasis of solid tumors) and the expression of integrin beta-1 (known to affect tumor cell migration and proliferation), it can be regarded as protumorigenic. Important for cell survival, as it may play a role not only in proliferation but also in the prevention of apoptosis in vascular smooth muscle cells. The polypeptide is Polyunsaturated fatty acid lipoxygenase ALOX12 (Homo sapiens (Human)).